A 289-amino-acid polypeptide reads, in one-letter code: MVSLPRLCALWGCLLTAVHLGQCVTCSDKQYLHDGQCCDLCQPGSRLTSHCTALEKTQCHPCDSGEFSAQWNREIRCHQHRHCEPNQGLRVKKEGTAESDTVCTCKEGQHCTSKDCEACAQHTPCIPGFGVMEMATETTDTVCHPCPVGFFSNQSSLFEKCYPWTSCEDKNLEVLQKGTSQTNVICGLKSRMRALLVIPVVMGILITIFGVFLYIKKVVKKPKDNEILPPAARRQDPQEMEDYPGHNTAAPVQETLHGCQPVTQEDGKESRISVQERQVTDSIALRPLV.

The signal sequence occupies residues 1–19 (MVSLPRLCALWGCLLTAVH). The Extracellular portion of the chain corresponds to 20–193 (LGQCVTCSDK…VICGLKSRMR (174 aa)). 4 TNFR-Cys repeats span residues 25–60 (TCSD…TQCH), 61–103 (PCDS…DTVC), 104–144 (TCKE…TVCH), and 145–187 (PCPV…VICG). 8 disulfide bridges follow: cysteine 26–cysteine 37, cysteine 38–cysteine 51, cysteine 41–cysteine 59, cysteine 62–cysteine 77, cysteine 83–cysteine 103, cysteine 105–cysteine 119, cysteine 111–cysteine 116, and cysteine 125–cysteine 143. A glycan (N-linked (GlcNAc...) asparagine) is linked at asparagine 153. The chain crosses the membrane as a helical span at residues 194-215 (ALLVIPVVMGILITIFGVFLYI). At 216-289 (KKVVKKPKDN…TDSIALRPLV (74 aa)) the chain is on the cytoplasmic side. A disordered region spans residues 228-251 (LPPAARRQDPQEMEDYPGHNTAAP).

In terms of assembly, monomer and homodimer. Interacts with TRAF1, TRAF2 and TRAF6. Interacts with TRAF3 and TRAF5. Interacts with TRAF6 and MAP3K8; the interaction is required for ERK activation.

It localises to the cell membrane. The protein resides in the secreted. In terms of biological role, receptor for TNFSF5/CD40LG. Transduces TRAF6- and MAP3K8-mediated signals that activate ERK in macrophages and B cells, leading to induction of immunoglobulin secretion. The chain is Tumor necrosis factor receptor superfamily member 5 (Cd40) from Mus musculus (Mouse).